We begin with the raw amino-acid sequence, 635 residues long: Iron transport multicopper oxidase FET3 (635 aa).

An N-terminal signal peptide occupies residues 1–17 (MMVPLLLSTYFITAVYG). The Extracellular portion of the chain corresponds to 18–559 (ATHTFHWTTG…KSIPTGFTKK (542 aa)). 2 Plastocyanin-like domains span residues 42-140 (ITCN…FVIE) and 190-292 (NLIL…LQLN). Asparagine 70 and asparagine 73 each carry an N-linked (GlcNAc...) asparagine glycan. The Cu cation site is built by histidine 77 and histidine 79. Asparagine 109 carries N-linked (GlcNAc...) asparagine glycosylation. Residues histidine 122 and histidine 124 each coordinate Cu cation. N-linked (GlcNAc...) asparagine glycosylation is found at asparagine 194, asparagine 198, asparagine 244, asparagine 265, asparagine 292, and asparagine 359. A Plastocyanin-like 3 domain is found at 382–501 (NPFIYGTNTN…QGLAVVMVED (120 aa)). Histidine 413, histidine 416, and histidine 418 together coordinate Cu cation. Asparagine 443 is a glycosylation site (N-linked (GlcNAc...) asparagine). 4 residues coordinate Cu cation: histidine 483, cysteine 484, histidine 485, and histidine 489. Asparagine 535 carries N-linked (GlcNAc...) asparagine glycosylation. The helical transmembrane segment at 560 to 580 (GIIAMTFSCLAGVLGITMIAI) threads the bilayer. At 581–628 (YGFSEIPEPEIKVMRNLHLNPEDVLEKTSSSSVISASNSSSLEDSRNQ) the chain is on the cytoplasmic side.

It belongs to the multicopper oxidase family. Requires Cu cation as cofactor.

It localises to the cell membrane. In terms of biological role, iron transport multicopper ferroxidase required for Fe(2+) high affinity uptake. Required to oxidize Fe(2+) and release it from the transporter. Essential component of copper-dependent iron transport. This Candida glabrata (strain ATCC 2001 / BCRC 20586 / JCM 3761 / NBRC 0622 / NRRL Y-65 / CBS 138) (Yeast) protein is Iron transport multicopper oxidase FET3 (FET3).